The primary structure comprises 196 residues: Neurensin-1 (196 aa).

2 consecutive transmembrane segments (helical) span residues 67–87 (LISG…GFLV) and 121–141 (AVLF…SVFA).

It belongs to the VMP family. In terms of tissue distribution, expressed predominantly in brain. Also weakly expressed in lung and spleen. In brain, expressed strongly in nerve fibers of the cerebral cortex, anterior cerebral nuclei, hypothalamus, amygdaloid complex, brain stem of the metaencephalon and medulla oblongata, and moderately expressed in soma of neurons of the dentate gyrus of the hippocampus and Purkinje cells of the cerebellum.

It is found in the membrane. The protein resides in the cell projection. The protein localises to the neuron projection. Functionally, may play an important role in neural organelle transport, and in transduction of nerve signals or in nerve growth. May play a role in neurite extension. The protein is Neurensin-1 of Mus musculus (Mouse).